A 469-amino-acid chain; its full sequence is 3-isopropylmalate dehydratase large subunit (469 aa).

Residues Cys349, Cys410, and Cys413 each coordinate [4Fe-4S] cluster.

This sequence belongs to the aconitase/IPM isomerase family. LeuC type 1 subfamily. In terms of assembly, heterodimer of LeuC and LeuD. It depends on [4Fe-4S] cluster as a cofactor.

It catalyses the reaction (2R,3S)-3-isopropylmalate = (2S)-2-isopropylmalate. It participates in amino-acid biosynthesis; L-leucine biosynthesis; L-leucine from 3-methyl-2-oxobutanoate: step 2/4. In terms of biological role, catalyzes the isomerization between 2-isopropylmalate and 3-isopropylmalate, via the formation of 2-isopropylmaleate. The polypeptide is 3-isopropylmalate dehydratase large subunit (Aromatoleum aromaticum (strain DSM 19018 / LMG 30748 / EbN1) (Azoarcus sp. (strain EbN1))).